Consider the following 148-residue polypeptide: ATP synthase epsilon chain (148 aa).

It belongs to the ATPase epsilon chain family. F-type ATPases have 2 components, CF(1) - the catalytic core - and CF(0) - the membrane proton channel. CF(1) has five subunits: alpha(3), beta(3), gamma(1), delta(1), epsilon(1). CF(0) has three main subunits: a, b and c.

The protein localises to the cell inner membrane. Its function is as follows. Produces ATP from ADP in the presence of a proton gradient across the membrane. The protein is ATP synthase epsilon chain of Paracoccus denitrificans (strain Pd 1222).